We begin with the raw amino-acid sequence, 350 residues long: Small ribosomal subunit biogenesis GTPase RsgA (350 aa).

Residues 1-17 are compositionally biased toward polar residues; it reads MSKNKLSKGQQRRVNAN. Positions 1-27 are disordered; that stretch reads MSKNKLSKGQQRRVNANHQRRLKTSAE. The region spanning 104–273 is the CP-type G domain; the sequence is TSVLTRPDFY…VIDSPGVREF (170 aa). GTP-binding positions include 160 to 163 and 214 to 222; these read NKID and GQSGVGKSS. Positions 297, 302, 304, and 310 each coordinate Zn(2+).

It belongs to the TRAFAC class YlqF/YawG GTPase family. RsgA subfamily. In terms of assembly, monomer. Associates with 30S ribosomal subunit, binds 16S rRNA. Zn(2+) is required as a cofactor.

It is found in the cytoplasm. Its function is as follows. One of several proteins that assist in the late maturation steps of the functional core of the 30S ribosomal subunit. Helps release RbfA from mature subunits. May play a role in the assembly of ribosomal proteins into the subunit. Circularly permuted GTPase that catalyzes slow GTP hydrolysis, GTPase activity is stimulated by the 30S ribosomal subunit. The chain is Small ribosomal subunit biogenesis GTPase RsgA from Salmonella agona (strain SL483).